Consider the following 268-residue polypeptide: Shikimate dehydrogenase (NADP(+)) (268 aa).

Shikimate is bound by residues 13-15 (SLS) and Thr60. The Proton acceptor role is filled by Lys64. Glu76 contributes to the NADP(+) binding site. Positions 85 and 100 each coordinate shikimate. NADP(+)-binding positions include 124 to 128 (GAGGA), 148 to 153 (NRTMAR), and Ile209. A shikimate-binding site is contributed by Tyr211. Gly232 provides a ligand contact to NADP(+).

It belongs to the shikimate dehydrogenase family. Homodimer.

It catalyses the reaction shikimate + NADP(+) = 3-dehydroshikimate + NADPH + H(+). It functions in the pathway metabolic intermediate biosynthesis; chorismate biosynthesis; chorismate from D-erythrose 4-phosphate and phosphoenolpyruvate: step 4/7. Its function is as follows. Involved in the biosynthesis of the chorismate, which leads to the biosynthesis of aromatic amino acids. Catalyzes the reversible NADPH linked reduction of 3-dehydroshikimate (DHSA) to yield shikimate (SA). The sequence is that of Shikimate dehydrogenase (NADP(+)) from Staphylococcus aureus (strain USA300).